Reading from the N-terminus, the 67-residue chain is U-myrmeciitoxin(01)-Mg4a (67 aa).

The N-terminal stretch at 1 to 25 (MGKVFFFVLMIAIIGSTFLIEEALG) is a signal peptide.

The protein belongs to the ant myrmeciitoxin-01 family. Homodimer; disulfide-linked. Contains 2 intrachain disulfide bonds (one per chain) and 1 interchain disulfide bond. As to expression, expressed by the venom gland.

Its subcellular location is the secreted. This chain is U-myrmeciitoxin(01)-Mg4a, found in Myrmecia gulosa (Red bulldog ant).